The primary structure comprises 511 residues: Lysine--tRNA ligase 2 (511 aa).

The span at 1–11 (MTMEINNTDPS) shows a compositional bias: polar residues. Positions 1 to 21 (MTMEINNTDPSENMPLPDDVD) are disordered. Residues E421 and E428 each coordinate Mg(2+).

The protein belongs to the class-II aminoacyl-tRNA synthetase family. In terms of assembly, homodimer. It depends on Mg(2+) as a cofactor.

It localises to the cytoplasm. It catalyses the reaction tRNA(Lys) + L-lysine + ATP = L-lysyl-tRNA(Lys) + AMP + diphosphate. This chain is Lysine--tRNA ligase 2, found in Methanosarcina acetivorans (strain ATCC 35395 / DSM 2834 / JCM 12185 / C2A).